The chain runs to 253 residues: 3-dehydroquinate dehydratase (253 aa).

3-dehydroquinate contacts are provided by residues 46–48 (EWR) and Arg-82. His-143 functions as the Proton donor/acceptor in the catalytic mechanism. Catalysis depends on Lys-170, which acts as the Schiff-base intermediate with substrate. 3-dehydroquinate contacts are provided by Arg-213, Ser-232, and Gln-236.

Belongs to the type-I 3-dehydroquinase family. Homodimer.

The enzyme catalyses 3-dehydroquinate = 3-dehydroshikimate + H2O. It functions in the pathway metabolic intermediate biosynthesis; chorismate biosynthesis; chorismate from D-erythrose 4-phosphate and phosphoenolpyruvate: step 3/7. Inhibited by flavonoids such as datiscetin, naringenin, marein and phloretin. Involved in the third step of the chorismate pathway, which leads to the biosynthesis of aromatic amino acids (AroAA). Catalyzes the cis-dehydration of 3-dehydroquinate (DHQ) and introduces the first double bond of the aromatic ring to yield 3-dehydroshikimate. The reaction involves the formation of an imine intermediate between the keto group of 3-dehydroquinate and the epsilon-amino group of Lys-170 at the active site. The sequence is that of 3-dehydroquinate dehydratase from Enterococcus faecalis (strain ATCC 700802 / V583).